We begin with the raw amino-acid sequence, 312 residues long: Speedy protein A (312 aa).

The segment at 67–199 (RQEMTAFFKL…SHYIWQRERS (133 aa)) is speedy/Ringo box; Required for CDK-binding. At Ser221 the chain carries Phosphoserine. Thr223 bears the Phosphothreonine mark.

The protein belongs to the Speedy/Ringo family. As to quaternary structure, interacts with CDK1. Interacts with CDK2. May interact with CDKN1B/KIP1. Identified in a complex with CDK2 and CDKN1B/KIP1, where it interacts primarily with CDK2.

The protein localises to the nucleus. Regulates the G1/S phase transition of the cell cycle by binding and activating CDK1 and CDK2. Contributes to CDK2 activation without promoting CDK2 phosphorylation, by inducing a conformation change of the CDK2 T-loop that obstructs the substrate-binding cleft prior to kinase activation. Interferes with CDKN1B-mediated inhibition of CDK2. Mediates cell survival during the DNA damage process through activation of CDK2. This is Speedy protein A from Rattus norvegicus (Rat).